Here is a 468-residue protein sequence, read N- to C-terminus: Argininosuccinate lyase (468 aa).

This sequence belongs to the lyase 1 family. Argininosuccinate lyase subfamily.

Its subcellular location is the cytoplasm. The enzyme catalyses 2-(N(omega)-L-arginino)succinate = fumarate + L-arginine. Its pathway is amino-acid biosynthesis; L-arginine biosynthesis; L-arginine from L-ornithine and carbamoyl phosphate: step 3/3. The protein is Argininosuccinate lyase of Paraburkholderia phymatum (strain DSM 17167 / CIP 108236 / LMG 21445 / STM815) (Burkholderia phymatum).